Reading from the N-terminus, the 1046-residue chain is UDP-N-acetylglucosamine--peptide N-acetylglucosaminyltransferase 110 kDa subunit (1046 aa).

Alanine 2 carries the post-translational modification N-acetylalanine. 2 positions are modified to phosphoserine; by GSK3-beta; alternate: serine 3 and serine 4. Serine 3 and serine 4 each carry an O-linked (GlcNAc) serine; alternate glycan. Position 20 is a phosphoserine (serine 20). TPR repeat units lie at residues 21–54, 89–122, 123–156, 157–190, 191–224, 225–258, 259–292, 293–326, 327–360, 361–394, 395–428, and 429–462; these read FQGL…EPDN, AEAY…KPDF, IDGY…NPDL, YCVR…QPNF, AVAW…DPNF, LDAY…SPNH, AVVH…QPHF, PDAY…CPTH, ADSL…FPEF, AAAH…SPTF, ADAY…NPAF, and ADAH…KPDF. Residue serine 399 is glycosylated (O-linked (GlcNAc) serine; by autocatalysis). Threonine 454 bears the Phosphothreonine mark. A TPR 13; truncated repeat occupies 463 to 473; it reads PDAYCNLAHCL. A DFP motif motif is present at residues 464–466; the sequence is DAY. A Nuclear localization signal motif is present at residues 487-503; it reads KKLVSIVADQLEKNRLP. Histidine 508 serves as the catalytic Proton acceptor. UDP contacts are provided by residues glutamine 849, lysine 852, 906 to 908, 911 to 914, 930 to 932, and aspartate 935; these read APK, HVRR, and HTT. A Phosphotyrosine modification is found at tyrosine 989. The tract at residues 991–1010 is required for phosphatidylinositol 3,4,5-triphosphate binding; it reads KKIRGKVWKQRISSPLFNTK.

This sequence belongs to the glycosyltransferase 41 family. O-GlcNAc transferase subfamily. In terms of assembly, monomer; may exist in different oligomerization states in cells. Homotrimer, oligomerizes via TPR repeats 6 and 7. Trimerization is not necessary for activity in vitro, however it increases affinity for UDP-GlcNAc. Component of a THAP1/THAP3-HCFC1-OGT complex. Component of the NSL complex at least composed of MOF/KAT8, KANSL1, KANSL2, KANSL3, MCRS1, PHF20, OGT1/OGT, WDR5 and HCFC1. Found in a complex with KIF5B, RHOT1, RHOT2 and TRAK1. Found in a complex composed of at least SINHCAF, SIN3A, HDAC1, SAP30, RBBP4, OGT and TET1. Component of a complex composed of KMT2E/MLL5, OGT and USP7; the complex stabilizes KMT2E/MLL5, preventing KMT2E/MLL5 ubiquitination and proteasomal-mediated degradation. Interacts (via TPRs 1-6) with SIN3A; the interaction mediates transcriptional repression in parallel with histone deacetylase. Interacts (via TPR 5-6) with TET1, TET2 and TET3. Interacts (via TPR repeats 6 and 7) with ATXN10. Interacts with NSD2. Interacts with PROSER1; this interaction mediates TET2 O-GlcNAcylation and stability by promoting the interaction between OGT and TET2. Post-translationally, ubiquitinated by the SCF(FBXO31) complex, leading to its proteasomal degradation. Phosphorylation on Ser-3 or Ser-4 by GSK3-beta positively regulates its activity. Phosphorylation at Thr-454 by AMPK promotes nuclear localization. In terms of processing, glycosylated via autocatalysis; O-GlcNAcylation at Ser-399 promotes nuclear localization.

The protein resides in the nucleus. Its subcellular location is the cytoplasm. The enzyme catalyses L-seryl-[protein] + UDP-N-acetyl-alpha-D-glucosamine = 3-O-(N-acetyl-beta-D-glucosaminyl)-L-seryl-[protein] + UDP + H(+). The catalysed reaction is L-threonyl-[protein] + UDP-N-acetyl-alpha-D-glucosamine = 3-O-(N-acetyl-beta-D-glucosaminyl)-L-threonyl-[protein] + UDP + H(+). Its pathway is protein modification; protein glycosylation. Its activity is regulated as follows. Subject to product inhibition by UDP. Functionally, catalyzes the transfer of a single N-acetylglucosamine from UDP-GlcNAc to a serine or threonine residue in cytoplasmic and nuclear proteins resulting in their modification with a beta-linked N-acetylglucosamine (O-GlcNAc). Glycosylates a large and diverse number of proteins including histone H2B, AKT1, AMPK, ATG4B, CAPRIN1, EZH2, FNIP1, GSDMD, KRT7, LMNA, LMNB1, LMNB2, RPTOR, HOXA1, PFKL, KMT2E/MLL5, MAPT/TAU, TET2, RBL2, RET, NOD2 and HCFC1. Can regulate their cellular processes via cross-talk between glycosylation and phosphorylation or by affecting proteolytic processing. Involved in insulin resistance in muscle and adipocyte cells via glycosylating insulin signaling components and inhibiting the 'Thr-308' phosphorylation of AKT1, enhancing IRS1 phosphorylation and attenuating insulin signaling. Involved in glycolysis regulation by mediating glycosylation of 6-phosphofructokinase PFKL, inhibiting its activity. Plays a key role in chromatin structure by mediating O-GlcNAcylation of 'Ser-112' of histone H2B: recruited to CpG-rich transcription start sites of active genes via its interaction with TET proteins (TET1, TET2 or TET3). As part of the NSL complex indirectly involved in acetylation of nucleosomal histone H4 on several lysine residues. O-GlcNAcylation of 'Ser-75' of EZH2 increases its stability, and facilitating the formation of H3K27me3 by the PRC2/EED-EZH2 complex. Stabilizes KMT2E/MLL5 by mediating its glycosylation, thereby preventing KMT2E/MLL5 ubiquitination. Regulates circadian oscillation of the clock genes and glucose homeostasis in the liver. Stabilizes clock proteins BMAL1 and CLOCK through O-glycosylation, which prevents their ubiquitination and subsequent degradation. Promotes the CLOCK-BMAL1-mediated transcription of genes in the negative loop of the circadian clock such as PER1/2 and CRY1/2. O-glycosylates HCFC1 and regulates its proteolytic processing and transcriptional activity. Component of a THAP1/THAP3-HCFC1-OGT complex that is required for the regulation of the transcriptional activity of RRM1. Regulates mitochondrial motility in neurons by mediating glycosylation of TRAK1. Promotes autophagy by mediating O-glycosylation of ATG4B. Acts as a regulator of mTORC1 signaling by mediating O-glycosylation of RPTOR and FNIP1: O-GlcNAcylation of RPTOR in response to glucose sufficiency promotes activation of the mTORC1 complex. The polypeptide is UDP-N-acetylglucosamine--peptide N-acetylglucosaminyltransferase 110 kDa subunit (OGT) (Sus scrofa (Pig)).